The primary structure comprises 216 residues: Pathogenicity-related ORF2 (216 aa).

The next 4 membrane-spanning stretches (helical) occupy residues 6 to 26 (VGSL…AAMV), 55 to 75 (LNGV…MEAF), 157 to 177 (IGFL…NALM), and 193 to 213 (FKLL…GLVL).

It belongs to the FliP/MopC/SpaP family.

It localises to the cell membrane. Its function is as follows. Important for pathogenicity. The protein is Pathogenicity-related ORF2 of Xanthomonas campestris pv. glycines.